A 102-amino-acid polypeptide reads, in one-letter code: Small ribosomal subunit protein uS10 (102 aa).

The protein belongs to the universal ribosomal protein uS10 family. In terms of assembly, part of the 30S ribosomal subunit.

Functionally, involved in the binding of tRNA to the ribosomes. The polypeptide is Small ribosomal subunit protein uS10 (Rhodopseudomonas palustris (strain HaA2)).